Here is a 639-residue protein sequence, read N- to C-terminus: tRNA-dihydrouridine(47) synthase [NAD(P)(+)]-like (639 aa).

Composition is skewed to polar residues over residues 1–19 (MAES…TVTQ) and 54–65 (QTCSELSGNDAE). Disordered stretches follow at residues 1–20 (MAES…VTQK) and 52–122 (DKQT…HSQF). Basic and acidic residues predominate over residues 66–85 (NTVRAEDAAEPEAKRIKLDD). Over residues 103-119 (EKKRARGQNKSRPHMKH) the composition is skewed to basic residues. 2 C3H1-type zinc fingers span residues 122-152 (FEEN…HDVA) and 160-190 (EDIR…HLGD). FMN is bound by residues 300–302 (PLT) and Gln354. Catalysis depends on Cys385, which acts as the Proton donor. Residues Lys424, His454, 486–488 (NGD), and 509–510 (AR) contribute to the FMN site.

This sequence belongs to the Dus family. Dus3 subfamily. Requires FMN as cofactor.

The enzyme catalyses 5,6-dihydrouridine(47) in tRNA + NAD(+) = uridine(47) in tRNA + NADH + H(+). The catalysed reaction is 5,6-dihydrouridine(47) in tRNA + NADP(+) = uridine(47) in tRNA + NADPH + H(+). It carries out the reaction a 5,6-dihydrouridine in mRNA + NAD(+) = a uridine in mRNA + NADH + H(+). It catalyses the reaction a 5,6-dihydrouridine in mRNA + NADP(+) = a uridine in mRNA + NADPH + H(+). In terms of biological role, catalyzes the synthesis of dihydrouridine, a modified base, in various RNAs, such as tRNAs, mRNAs and some long non-coding RNAs (lncRNAs). Mainly modifies the uridine in position 47 (U47) in the D-loop of most cytoplasmic tRNAs. Also able to mediate the formation of dihydrouridine in some mRNAs, thereby regulating their translation. This is tRNA-dihydrouridine(47) synthase [NAD(P)(+)]-like (dus3l) from Xenopus tropicalis (Western clawed frog).